A 259-amino-acid polypeptide reads, in one-letter code: E3 ubiquitin-protein ligase RNF170 (259 aa).

The Lumenal segment spans residues 1-25; it reads MAKYQGEVQSLKLDDDSVIEGVSDQ. A helical transmembrane segment spans residues 26–46; sequence VLVAVVVSLALIATLVYALFS. The Cytoplasmic portion of the chain corresponds to 47 to 202; the sequence is RNAHQNIHPE…GGLFWMFRIR (156 aa). An RING-type zinc finger spans residues 88-131; it reads CPICLHQASLPVETNCGHLFCGTCIVAYWRYGSWLGAISCPICR. Residues 203 to 223 form a helical membrane-spanning segment; the sequence is IILCLMGAFFYLISPLDFVPE. Ala-224 is a topological domain (lumenal). A helical membrane pass occupies residues 225-245; that stretch reads LFGILGFLDDFFVIFLLLIYI. Residues 246–259 lie on the Cytoplasmic side of the membrane; that stretch reads SIMYREVITQRLNR.

In terms of assembly, constitutively associated with the ERLIN1/ERLIN 2 complex. Interacts with activated ITPR1.

It is found in the endoplasmic reticulum membrane. The enzyme catalyses S-ubiquitinyl-[E2 ubiquitin-conjugating enzyme]-L-cysteine + [acceptor protein]-L-lysine = [E2 ubiquitin-conjugating enzyme]-L-cysteine + N(6)-ubiquitinyl-[acceptor protein]-L-lysine.. It participates in protein modification; protein ubiquitination. Functionally, E3 ubiquitin-protein ligase. Plays an essential role in stimulus-induced inositol 1,4,5-trisphosphate receptor type 1 (ITPR1) ubiquitination and degradation via the endoplasmic reticulum-associated degradation (ERAD) pathway. Also involved in ITPR1 turnover in resting cells. Selectively inhibits the TLR3-triggered innate immune response by promoting the 'Lys-48'-linked polyubiquitination and degradation of TLR3. The polypeptide is E3 ubiquitin-protein ligase RNF170 (RNF170) (Bos taurus (Bovine)).